The following is a 436-amino-acid chain: mRNA cap guanine-N(7) methyltransferase (436 aa).

The tract at residues Met-1 to Leu-50 is disordered. The 284-residue stretch at Ser-141–Val-424 folds into the mRNA cap 0 methyltransferase domain. Asn-150–Asn-151 is an mRNA binding site. Residues Lys-154, Gly-172, Asp-194, Asp-223, Gln-249, and Tyr-254 each coordinate S-adenosyl-L-methionine.

The protein belongs to the class I-like SAM-binding methyltransferase superfamily. mRNA cap 0 methyltransferase family.

The protein resides in the nucleus. The catalysed reaction is a 5'-end (5'-triphosphoguanosine)-ribonucleoside in mRNA + S-adenosyl-L-methionine = a 5'-end (N(7)-methyl 5'-triphosphoguanosine)-ribonucleoside in mRNA + S-adenosyl-L-homocysteine. Functionally, responsible for methylating the 5'-cap structure of mRNAs. The chain is mRNA cap guanine-N(7) methyltransferase (ABD1) from Saccharomyces cerevisiae (strain ATCC 204508 / S288c) (Baker's yeast).